We begin with the raw amino-acid sequence, 229 residues long: uncharacterized protein (229 aa).

Positions 2–69 (QRLAKIISNA…KPRLWIYYKP (68 aa)) constitute an S4 RNA-binding domain. The active-site Nucleophile is the Asp102.

It belongs to the pseudouridine synthase RsuA family.

It carries out the reaction a uridine in RNA = a pseudouridine in RNA. This is an uncharacterized protein from Rickettsia felis (strain ATCC VR-1525 / URRWXCal2) (Rickettsia azadi).